The sequence spans 184 residues: Putative manganese efflux pump MntP (184 aa).

5 helical membrane-spanning segments follow: residues 39–59 (IFGVFQALMPFLGYILGLSFV), 65–85 (IDHFIAFGILGFLGAKMILEA), 102–122 (LALGAVATSIDALAVGITFSF), 132–152 (LIIGTVCFVLCTAACYVGKIL), and 161–181 (LVLGGLILIGLGTKILITHLV).

Belongs to the MntP (TC 9.B.29) family.

It localises to the cell inner membrane. Functionally, probably functions as a manganese efflux pump. The protein is Putative manganese efflux pump MntP of Campylobacter curvus (strain 525.92).